The sequence spans 27 residues: Bombinin-like peptide 2 (27 aa).

Asn27 is modified (asparagine amide).

It belongs to the bombinin family. Expressed by the skin glands.

The protein localises to the secreted. Its function is as follows. Has antimicrobial activity, but no hemolytic activity. Preference on killing Gram-negative non-enteric bacteria. This is Bombinin-like peptide 2 from Bombina orientalis (Oriental fire-bellied toad).